A 170-amino-acid polypeptide reads, in one-letter code: MSSLRIPIALQQAVMRCLRHKLQLANQHLGTDYPEPKINYHQRGTSAGSAYLQSFEIRLNPVLLLENQQPFIDEVVPHELAHLLVYRQFGRVPPHGKEWRWMMEHVLQVPASRTHQFAVTSVRSKTFNYQCKCQQHALTIRRHNKVQRGESEYRCRECGEKLQFVAKKTC.

The 143-residue stretch at 23–165 (QLANQHLGTD…RECGEKLQFV (143 aa)) folds into the SprT-like domain. His-78 contacts Zn(2+). Glu-79 is a catalytic residue. His-82 contacts Zn(2+).

This sequence belongs to the SprT family. It depends on Zn(2+) as a cofactor.

It is found in the cytoplasm. The protein is Protein SprT of Yersinia enterocolitica serotype O:8 / biotype 1B (strain NCTC 13174 / 8081).